Consider the following 640-residue polypeptide: MPVVTLPDGSKREYEAPVRVADVAQSIGSGLAKAALGGIVDGQMVDTSFVIDKDSHLAIITDKSPEALEIVRHSTAHLLAYAVKELFPEAQVTIGPVIENGFYYDFSYHRPFTPDDLVALEKKMTELAKKDEPVVRTVMPRDEAVEFFKQQGENYKAELIASIPQGEDVSLYAEGKFTDLCRGPHVPSTGKLKVFKLMKLAGAYWRGDSKNEMLQRIYGTAWLRKEDQDAYLHMLEESEKRDHRRLGKQLDLFHFQEEAPGLIFWHPKGWSIWQEVEQYMRRVYQNEGYQEVKAPQILDRGLWEKSGHWDNYKENMFTTESENRAYALKPMNCPGHVQIYNSGLHSYRELPLRFGEFGQCHRNEPSGALHGLMRVRGFTQDDGHIFCTEDQIQSEVAAFDKAVRAVYQDFGFTEVAVKLALRPAKRVGDDAIWDKAEDALRGALKASGQEWEELPGEGAFYGPKIEYHLKDSIGRTWQCGTIQVDFSMPARLGAEYVAEDNSRKTPVMLHRAIVGSLERFIGILIENHAGNMPVWLAPTQAVVLNISGNSAAYAQKVQQSLKKQGFRVESDLRNEKITYKIREHALQKIPFLLVVGDKESESNTVAVRARGGVDLGVMPLDAFVARLQQDISQKVGPEPS.

The 61-residue stretch at 1-61 (MPVVTLPDGS…DKDSHLAIIT (61 aa)) folds into the TGS domain. The segment at 242 to 533 (DHRRLGKQLD…LIENHAGNMP (292 aa)) is catalytic. Zn(2+) is bound by residues cysteine 333, histidine 384, and histidine 510.

The protein belongs to the class-II aminoacyl-tRNA synthetase family. In terms of assembly, homodimer. Zn(2+) serves as cofactor.

Its subcellular location is the cytoplasm. The enzyme catalyses tRNA(Thr) + L-threonine + ATP = L-threonyl-tRNA(Thr) + AMP + diphosphate + H(+). Catalyzes the attachment of threonine to tRNA(Thr) in a two-step reaction: L-threonine is first activated by ATP to form Thr-AMP and then transferred to the acceptor end of tRNA(Thr). Also edits incorrectly charged L-seryl-tRNA(Thr). The chain is Threonine--tRNA ligase from Polynucleobacter asymbioticus (strain DSM 18221 / CIP 109841 / QLW-P1DMWA-1) (Polynucleobacter necessarius subsp. asymbioticus).